Here is a 307-residue protein sequence, read N- to C-terminus: Fructokinase (307 aa).

This sequence belongs to the carbohydrate kinase PfkB family.

The catalysed reaction is D-fructose + ATP = D-fructose 6-phosphate + ADP + H(+). In Escherichia coli, this protein is Fructokinase (cscK).